A 239-amino-acid polypeptide reads, in one-letter code: Sugar fermentation stimulation protein homolog (239 aa).

The protein belongs to the SfsA family.

This chain is Sugar fermentation stimulation protein homolog, found in Synechococcus sp. (strain JA-2-3B'a(2-13)) (Cyanobacteria bacterium Yellowstone B-Prime).